Consider the following 80-residue polypeptide: SPbeta prophage-derived thioredoxin-like protein YosR (80 aa).

In terms of domain architecture, Thioredoxin spans 1–80 (MRLIKLEQPN…ELDELLKELR (80 aa)). A disulfide bond links Cys-11 and Cys-14.

The protein belongs to the thioredoxin family.

This Bacillus subtilis (strain 168) protein is SPbeta prophage-derived thioredoxin-like protein YosR (yosR).